The following is a 356-amino-acid chain: Transcription factor ATOH1 (356 aa).

Over residues 1–21 the composition is skewed to basic and acidic residues; the sequence is MSRLLHAEEWAEVKELGDHHR. Disordered stretches follow at residues 1–56 and 92–125; these read MSRL…PELS and SEAA…GPVK. Residues 26–40 show a composition bias toward pro residues; that stretch reads HHLPQPPPPPPPQPP. The span at 96–109 shows a compositional bias: basic and acidic residues; sequence APRDEVDGRGELVR. A compositionally biased stretch (low complexity) spans 110–124; it reads RSSGGASSSKSPGPV. One can recognise a bHLH domain in the interval 161-213; it reads QRRLAANARERRRMHGLNHAFDQLRNVIPSFNNDKKLSKYETLQMAQIYINAL. 2 disordered regions span residues 218–279 and 314–356; these read QTPS…TRFS and SPSL…DEAS. Residues 252 to 266 show a composition bias toward low complexity; the sequence is NATAAGAQQASGGSQ. Residues 337 to 356 show a composition bias toward basic and acidic residues; the sequence is HRSDGEFSPHSHYSDSDEAS.

Efficient DNA binding requires dimerization with another bHLH protein.

The protein resides in the nucleus. Its function is as follows. Transcriptional regulator. Activates E box-dependent transcription in collaboration with TCF3/E47, but the activity is completely antagonized by the negative regulator of neurogenesis HES1. Plays a role in the differentiation of subsets of neural cells by activating E box-dependent transcription. This is Transcription factor ATOH1 from Pan troglodytes (Chimpanzee).